Consider the following 340-residue polypeptide: Fructoselysine 6-phosphate deglycase (340 aa).

SIS domains lie at Ile35–Pro169 and Leu201–Arg331.

As to quaternary structure, homododecamer.

The catalysed reaction is N(6)-(6-phospho-D-fructosyl)-L-lysine + H2O = D-glucose 6-phosphate + L-lysine. It functions in the pathway carbohydrate metabolism; fructoselysine degradation; D-glucose 6-phosphate and lysine from fructoselysine: step 2/2. Strongly inhibited by ZnCl(2). Functionally, catalyzes the reversible conversion of fructoselysine 6-phosphate to glucose 6-phosphate and lysine. Functions in a fructoselysine degradation pathway that allows E.coli to grow on fructoselysine or psicoselysine. This chain is Fructoselysine 6-phosphate deglycase, found in Escherichia coli (strain K12).